Here is a 90-residue protein sequence, read N- to C-terminus: MFSFRKFLAFMLIVIALMASFSSAQPIDEERPIFMERREASAFGDIIGELKGKGLGGRMRFGKRSSSPSDISMAELRAIYGGGPVEYVQL.

An N-terminal signal peptide occupies residues 1-24 (MFSFRKFLAFMLIVIALMASFSSA). The propeptide occupies 25-36 (QPIDEERPIFME). Phe61 is modified (phenylalanine amide). The propeptide occupies 65-90 (SSSPSDISMAELRAIYGGGPVEYVQL).

This sequence belongs to the FARP (FMRFamide related peptide) family.

It is found in the secreted. Its function is as follows. FMRFamides and FMRFamide-like peptides are neuropeptides. This is FMRFamide-like neuropeptides 27 from Caenorhabditis briggsae.